Here is a 216-residue protein sequence, read N- to C-terminus: Redox-sensing transcriptional repressor Rex (216 aa).

Residues 15 to 54 (KYLRVTQQLIEEGRDAVSSKELGDFTGINPVQVRRDLNAI) constitute a DNA-binding region (H-T-H motif). NAD(+) is bound at residue 89–94 (GAGNLG).

This sequence belongs to the transcriptional regulatory Rex family. Homodimer.

It localises to the cytoplasm. In terms of biological role, modulates transcription in response to changes in cellular NADH/NAD(+) redox state. The polypeptide is Redox-sensing transcriptional repressor Rex (Rubrobacter xylanophilus (strain DSM 9941 / JCM 11954 / NBRC 16129 / PRD-1)).